We begin with the raw amino-acid sequence, 149 residues long: Inner membrane protein YidI (149 aa).

At 1 to 8 the chain is on the cytoplasmic side; it reads MGIIAQNK. Residues 9-31 traverse the membrane as a helical segment; that stretch reads ISSLGMLFGAIALMMGIIHFSFG. Residues 32–77 lie on the Periplasmic side of the membrane; that stretch reads PFSAPPPTFESIVADKTAEIKRGLLAGIKGEKITTVEKKEDVDVDK. A helical transmembrane segment spans residues 78–97; sequence ILNQSGIALAIAALLCAFIG. Topologically, residues 98–117 are cytoplasmic; sequence GMRKENRWGIRGALVFGGGT. Residues 118-140 traverse the membrane as a helical segment; the sequence is LAFHTLLFGIGIVCSILLIFLIF. The Periplasmic portion of the chain corresponds to 141–149; sequence SFLTGGSLV.

The protein localises to the cell inner membrane. The polypeptide is Inner membrane protein YidI (yidI) (Escherichia coli (strain K12)).